The chain runs to 614 residues: Maltose permease MAL61 (614 aa).

The tract at residues 1–48 is disordered; the sequence is MKGLSSLINRKKDRNDSHLDEIENGVNATEFNSIEMEEQGKKSDFDLS. Topologically, residues 1-108 are cytoplasmic; it reads MKGLSSLINR…AAAWSLLVST (108 aa). Over residues 38 to 48 the composition is skewed to basic and acidic residues; sequence EQGKKSDFDLS. Residues 109–129 form a helical membrane-spanning segment; that stretch reads TLIQEGYDTAILGAFYALPVF. Over 130–144 the chain is Extracellular; sequence QKKYGSLNSNTGDYE. A helical membrane pass occupies residues 145–165; the sequence is ISVSWQIGLCLCYMAGEIVGL. At 166 to 180 the chain is on the cytoplasmic side; sequence QVTGPSVDYMGNRYT. Residues 181–201 traverse the membrane as a helical segment; it reads LIMALFFLAAFIFILYFCKSL. A topological domain (extracellular) is located at residue Gly202. Residues 203 to 223 traverse the membrane as a helical segment; that stretch reads MIAVGQALCGMPWGCFQCLTV. At 224 to 236 the chain is on the cytoplasmic side; the sequence is SYASEICPLALRY. A helical transmembrane segment spans residues 237 to 257; the sequence is YLTTYSNLCWTFGQLFAAGIM. At 258 to 272 the chain is on the extracellular side; the sequence is KNSQNKYANSELGYK. The helical transmembrane segment at 273–293 threads the bilayer; it reads LPFALQWIWPLPLAVGIFLAP. Residues 294-364 lie on the Cytoplasmic side of the membrane; sequence ESPWWLVKKG…KDGINRRRTR (71 aa). A helical membrane pass occupies residues 365 to 385; that stretch reads IACLCWIGQCSCGASLIGYST. The Extracellular segment spans residues 386 to 398; it reads YFYEKAGVSTDTA. Residues 399–419 form a helical membrane-spanning segment; sequence FTFSIIQYCLGIAATFVSWWA. Residues 420 to 427 lie on the Cytoplasmic side of the membrane; that stretch reads SKYCGRFD. Residues 428–448 traverse the membrane as a helical segment; that stretch reads LYAFGLAFQAIMFFIIGGLGC. At 449-460 the chain is on the extracellular side; the sequence is SDTHGAKMGSGA. The chain crosses the membrane as a helical span at residues 461–481; it reads LLMVVAFFYNLGIAPVVFCLV. At 482-493 the chain is on the cytoplasmic side; it reads SEMPSSRLRTKT. Residues 494-514 form a helical membrane-spanning segment; it reads IILARNAYNVIQVVVTVLIMY. At 515–526 the chain is on the extracellular side; it reads QLNSEKWNWGAK. Residues 527–547 traverse the membrane as a helical segment; that stretch reads SGFFWGGFCLATLAWAVVDLP. Over 548–614 the chain is Cytoplasmic; sequence ETAGRTFIEI…GRSTPSVVNK (67 aa). The disordered stretch occupies residues 594–614; the sequence is KEDLETSVVDEGRSTPSVVNK.

Belongs to the major facilitator superfamily. Sugar transporter (TC 2.A.1.1) family.

It localises to the membrane. Transporter for maltose. In Saccharomyces cerevisiae (Baker's yeast), this protein is Maltose permease MAL61 (MAL61).